The primary structure comprises 679 residues: Glutamine-dependent NAD(+) synthetase (679 aa).

In terms of domain architecture, CN hydrolase spans 12 to 276 (VRVAACTHHT…VRRSVADVDT (265 aa)). The Proton acceptor; for glutaminase activity role is filled by Glu52. Lys121 acts as the For glutaminase activity in catalysis. L-glutamine is bound at residue Tyr127. Catalysis depends on Cys176, which acts as the Nucleophile; for glutaminase activity. L-glutamine is bound by residues Ser203 and Arg209. The ligase stretch occupies residues 337-679 (QQDCYEAYNI…DQIDREVPKG (343 aa)). 366–373 (GVSGGLDS) serves as a coordination point for ATP. Asn456 is a binding site for deamido-NAD(+). Thr480 contacts ATP. Deamido-NAD(+)-binding positions include Glu485, 490–493 (WSTY), and Lys635. The interval 639–658 (LPNGPKVSHGGALSPRGDWR) is disordered.

The protein in the C-terminal section; belongs to the NAD synthetase family.

It catalyses the reaction deamido-NAD(+) + L-glutamine + ATP + H2O = L-glutamate + AMP + diphosphate + NAD(+) + H(+). The protein operates within cofactor biosynthesis; NAD(+) biosynthesis; NAD(+) from deamido-NAD(+) (L-Gln route): step 1/1. In terms of biological role, catalyzes the ATP-dependent amidation of deamido-NAD to form NAD. Uses L-glutamine as a nitrogen source. In Mycobacterium bovis (strain ATCC BAA-935 / AF2122/97), this protein is Glutamine-dependent NAD(+) synthetase.